The following is a 76-amino-acid chain: ATP synthase subunit 9, mitochondrial (76 aa).

2 helical membrane-spanning segments follow: residues 10-30 (IGAG…AIVF) and 52-72 (ILGF…SFLL).

The protein belongs to the ATPase C chain family. In terms of assembly, F-type ATPases have 2 components, CF(1) - the catalytic core - and CF(0) - the membrane proton channel. CF(1) has five subunits: alpha(3), beta(3), gamma(1), delta(1), epsilon(1). CF(0) has three main subunits: a, b and c.

The protein localises to the mitochondrion membrane. In terms of biological role, mitochondrial membrane ATP synthase (F(1)F(0) ATP synthase or Complex V) produces ATP from ADP in the presence of a proton gradient across the membrane which is generated by electron transport complexes of the respiratory chain. F-type ATPases consist of two structural domains, F(1) - containing the extramembraneous catalytic core and F(0) - containing the membrane proton channel, linked together by a central stalk and a peripheral stalk. During catalysis, ATP synthesis in the catalytic domain of F(1) is coupled via a rotary mechanism of the central stalk subunits to proton translocation. Part of the complex F(0) domain. A homomeric c-ring of probably 10 subunits is part of the complex rotary element. This Kluyveromyces lactis (strain ATCC 8585 / CBS 2359 / DSM 70799 / NBRC 1267 / NRRL Y-1140 / WM37) (Yeast) protein is ATP synthase subunit 9, mitochondrial (ATP9).